Consider the following 152-residue polypeptide: Ubiquitin-conjugating enzyme E2 2 (152 aa).

Residues 4–150 (PARKRLMRDF…VREVVEQSWT (147 aa)) enclose the UBC core domain. The Glycyl thioester intermediate role is filled by cysteine 88.

The protein belongs to the ubiquitin-conjugating enzyme family.

The catalysed reaction is S-ubiquitinyl-[E1 ubiquitin-activating enzyme]-L-cysteine + [E2 ubiquitin-conjugating enzyme]-L-cysteine = [E1 ubiquitin-activating enzyme]-L-cysteine + S-ubiquitinyl-[E2 ubiquitin-conjugating enzyme]-L-cysteine.. Its pathway is protein modification; protein ubiquitination. Catalyzes the covalent attachment of ubiquitin to other proteins. This chain is Ubiquitin-conjugating enzyme E2 2 (UBC2), found in Triticum aestivum (Wheat).